Consider the following 327-residue polypeptide: MEVGSVLFFVVIGLAIIALAVFFTFVPIMLWISALAAGVRISIFTLVGMRLRRVIPSRVVNPLIKASKAGLGITINQLESHYLAGGNVDRVVNALIAAHRANIELTFERGAAIDLAGRDVLEAVQMSVNPKVIETPFIAGVAMDGIEVKAKARITVRANIDRLVGGAGEETIIARVGEGIVSTIGSQTDHKKVLENPDMISQTVLGKGLDSGTAFEILSIDIADIDIGKNIGAVLQTDQAEADKNIAQAKAEERRAMAVAQEQEMRAKVEEMRAKVVEAEAEVPLAMAEALRSGNIGVMDYMNIQNLTADTDMRDSIGKMSKEDDEK.

The next 2 membrane-spanning stretches (helical) occupy residues V6–V26 and I28–G48.

It belongs to the flotillin-like FloA family. In terms of assembly, homooligomerizes.

It localises to the cell membrane. Its subcellular location is the membrane raft. Functionally, found in functional membrane microdomains (FMM) that may be equivalent to eukaryotic membrane rafts. FMMs are highly dynamic and increase in number as cells age. Flotillins are thought to be important factors in membrane fluidity. This chain is Flotillin-like protein FloA, found in Priestia megaterium (strain DSM 319 / IMG 1521) (Bacillus megaterium).